Reading from the N-terminus, the 303-residue chain is Taste receptor type 2 member 2 (303 aa).

The Extracellular segment spans residues 1–10 (MALSFSAILH). Residues 11-31 (IIMMSAEFFTGITVNGFLIIV) traverse the membrane as a helical segment. Residues 32–56 (NCNELIKHRKLMPIQILLMCIGMSR) are Cytoplasmic-facing. The helical transmembrane segment at 57-77 (FGLQMVLMVQSFFSVFFPLLY) threads the bilayer. Residues 78-79 (VK) are Extracellular-facing. Residues 80–100 (IIYGAAMMFLWMFFSSISLWF) traverse the membrane as a helical segment. Topologically, residues 101 to 102 (AT) are cytoplasmic. Residues 103–123 (CLSVFYCLKISGFTQSCFLWL) form a helical membrane-spanning segment. Topologically, residues 124–129 (KFRIPK) are extracellular. A helical transmembrane segment spans residues 130 to 150 (LIPWLLLGSVLASVSIASVCI). Residues 151-185 (EVDYAKNVEEDALRNTTLKKSKTKIKKISEVLLVN) lie on the Cytoplasmic side of the membrane. Residues 186 to 206 (LALIFPLAIFVMCTSMLLISL) traverse the membrane as a helical segment. Residues 207–234 (YKHTHRMQHGSHGFRNANTEAHINALKT) lie on the Extracellular side of the membrane. A helical membrane pass occupies residues 235-255 (VITFFCFFISYFAAFMTNMTF). At 256 to 277 (SLPYRSHQFFMLKDIMAAYPSG) the chain is on the cytoplasmic side.

It belongs to the G-protein coupled receptor T2R family.

It localises to the cell membrane. Bitter taste receptor that detects natural and synthetic bitter compounds. This Homo sapiens (Human) protein is Taste receptor type 2 member 2.